We begin with the raw amino-acid sequence, 273 residues long: 4-hydroxy-3-methylbut-2-enyl diphosphate reductase (273 aa).

[4Fe-4S] cluster is bound at residue Cys12. (2E)-4-hydroxy-3-methylbut-2-enyl diphosphate is bound by residues His36 and His70. 2 residues coordinate dimethylallyl diphosphate: His36 and His70. 2 residues coordinate isopentenyl diphosphate: His36 and His70. Cys92 lines the [4Fe-4S] cluster pocket. Residue His120 coordinates (2E)-4-hydroxy-3-methylbut-2-enyl diphosphate. His120 is a dimethylallyl diphosphate binding site. Residue His120 coordinates isopentenyl diphosphate. The Proton donor role is filled by Glu122. Thr157 contributes to the (2E)-4-hydroxy-3-methylbut-2-enyl diphosphate binding site. Cys185 is a [4Fe-4S] cluster binding site. Ser213, Ser214, Asn215, and Ser257 together coordinate (2E)-4-hydroxy-3-methylbut-2-enyl diphosphate. Residues Ser213, Ser214, Asn215, and Ser257 each coordinate dimethylallyl diphosphate. Positions 213, 214, 215, and 257 each coordinate isopentenyl diphosphate.

This sequence belongs to the IspH family. The cofactor is [4Fe-4S] cluster.

It carries out the reaction isopentenyl diphosphate + 2 oxidized [2Fe-2S]-[ferredoxin] + H2O = (2E)-4-hydroxy-3-methylbut-2-enyl diphosphate + 2 reduced [2Fe-2S]-[ferredoxin] + 2 H(+). The catalysed reaction is dimethylallyl diphosphate + 2 oxidized [2Fe-2S]-[ferredoxin] + H2O = (2E)-4-hydroxy-3-methylbut-2-enyl diphosphate + 2 reduced [2Fe-2S]-[ferredoxin] + 2 H(+). It functions in the pathway isoprenoid biosynthesis; dimethylallyl diphosphate biosynthesis; dimethylallyl diphosphate from (2E)-4-hydroxy-3-methylbutenyl diphosphate: step 1/1. Its pathway is isoprenoid biosynthesis; isopentenyl diphosphate biosynthesis via DXP pathway; isopentenyl diphosphate from 1-deoxy-D-xylulose 5-phosphate: step 6/6. Functionally, catalyzes the conversion of 1-hydroxy-2-methyl-2-(E)-butenyl 4-diphosphate (HMBPP) into a mixture of isopentenyl diphosphate (IPP) and dimethylallyl diphosphate (DMAPP). Acts in the terminal step of the DOXP/MEP pathway for isoprenoid precursor biosynthesis. In Helicobacter hepaticus (strain ATCC 51449 / 3B1), this protein is 4-hydroxy-3-methylbut-2-enyl diphosphate reductase.